The primary structure comprises 380 residues: Succinyl-diaminopimelate desuccinylase (380 aa).

H69 serves as a coordination point for Zn(2+). D71 is a catalytic residue. Residue D102 coordinates Zn(2+). Residue E135 is the Proton acceptor of the active site. Residues E136, E164, and H353 each coordinate Zn(2+).

It belongs to the peptidase M20A family. DapE subfamily. In terms of assembly, homodimer. The cofactor is Zn(2+). Co(2+) serves as cofactor.

The catalysed reaction is N-succinyl-(2S,6S)-2,6-diaminopimelate + H2O = (2S,6S)-2,6-diaminopimelate + succinate. The protein operates within amino-acid biosynthesis; L-lysine biosynthesis via DAP pathway; LL-2,6-diaminopimelate from (S)-tetrahydrodipicolinate (succinylase route): step 3/3. Its function is as follows. Catalyzes the hydrolysis of N-succinyl-L,L-diaminopimelic acid (SDAP), forming succinate and LL-2,6-diaminopimelate (DAP), an intermediate involved in the bacterial biosynthesis of lysine and meso-diaminopimelic acid, an essential component of bacterial cell walls. The sequence is that of Succinyl-diaminopimelate desuccinylase from Cereibacter sphaeroides (strain ATCC 17023 / DSM 158 / JCM 6121 / CCUG 31486 / LMG 2827 / NBRC 12203 / NCIMB 8253 / ATH 2.4.1.) (Rhodobacter sphaeroides).